The chain runs to 166 residues: Regulatory protein RecX (166 aa).

It belongs to the RecX family.

The protein resides in the cytoplasm. Its function is as follows. Modulates RecA activity. This is Regulatory protein RecX from Shigella boydii serotype 4 (strain Sb227).